The primary structure comprises 651 residues: p-hydroxybenzoic acid efflux pump subunit AaeB (651 aa).

11 helical membrane-spanning segments follow: residues 11-31, 41-61, 67-87, 91-111, 119-139, 150-170, 368-388, 405-425, 429-449, 460-480, and 481-501; these read FAFK…HLQL, AAIV…SGAI, LRII…VLTI, VLTL…SSLV, FGLA…TPLL, EIVL…PRSI, LFWL…IAVV, FLLG…FIIP, QSML…GIEV, LAST…VSLF, and LDSA…LLLI.

Belongs to the aromatic acid exporter ArAE (TC 2.A.85) family.

The protein localises to the cell inner membrane. Forms an efflux pump with AaeA. Could function as a metabolic relief valve, allowing to eliminate certain compounds when they accumulate to high levels in the cell. This is p-hydroxybenzoic acid efflux pump subunit AaeB from Yersinia enterocolitica serotype O:8 / biotype 1B (strain NCTC 13174 / 8081).